Reading from the N-terminus, the 184-residue chain is MKNVTDSFVSLGHWPSAGSFGVNTDILATNPINLSVVLGVLIFFGKGVLSDLLDNRKERILNTIRNSEELRGGAIERLEKARARLRKVEMEADQFRVNGYSEIEREKLNLINSTYKILEQLENYKNETIYFEQQRAINQVRQRVFQQALQGALGTLNSSLNNELHLRTISANIGLFGVMKEITD.

Residues 27-49 (LATNPINLSVVLGVLIFFGKGVL) traverse the membrane as a helical segment.

Belongs to the ATPase B chain family. As to quaternary structure, F-type ATPases have 2 components, F(1) - the catalytic core - and F(0) - the membrane proton channel. F(1) has five subunits: alpha(3), beta(3), gamma(1), delta(1), epsilon(1). F(0) has four main subunits: a(1), b(1), b'(1) and c(10-14). The alpha and beta chains form an alternating ring which encloses part of the gamma chain. F(1) is attached to F(0) by a central stalk formed by the gamma and epsilon chains, while a peripheral stalk is formed by the delta, b and b' chains.

It is found in the plastid. The protein resides in the chloroplast thylakoid membrane. Its function is as follows. F(1)F(0) ATP synthase produces ATP from ADP in the presence of a proton or sodium gradient. F-type ATPases consist of two structural domains, F(1) containing the extramembraneous catalytic core and F(0) containing the membrane proton channel, linked together by a central stalk and a peripheral stalk. During catalysis, ATP synthesis in the catalytic domain of F(1) is coupled via a rotary mechanism of the central stalk subunits to proton translocation. In terms of biological role, component of the F(0) channel, it forms part of the peripheral stalk, linking F(1) to F(0). This chain is ATP synthase subunit b, chloroplastic, found in Gossypium barbadense (Sea Island cotton).